The sequence spans 482 residues: Cardiolipin synthase (482 aa).

Helical transmembrane passes span 4-24 (LAYL…VTVF) and 34-54 (WAWL…YLIF). PLD phosphodiesterase domains are found at residues 217 to 244 (LNYR…GDEY) and 395 to 422 (DNGF…DFRS). Active-site residues include His-222, Lys-224, Asp-229, His-400, Lys-402, and Asp-407.

It belongs to the phospholipase D family. Cardiolipin synthase subfamily.

The protein resides in the cell membrane. The catalysed reaction is 2 a 1,2-diacyl-sn-glycero-3-phospho-(1'-sn-glycerol) = a cardiolipin + glycerol. Catalyzes the reversible phosphatidyl group transfer from one phosphatidylglycerol molecule to another to form cardiolipin (CL) (diphosphatidylglycerol) and glycerol. This is Cardiolipin synthase (cls) from Listeria welshimeri serovar 6b (strain ATCC 35897 / DSM 20650 / CCUG 15529 / CIP 8149 / NCTC 11857 / SLCC 5334 / V8).